The following is a 139-amino-acid chain: Probable disulfide formation protein C 1 (139 aa).

A helical transmembrane segment spans residues E8 to Y27. A disulfide bridge connects residues C37 and C40. The next 2 membrane-spanning stretches (helical) occupy residues Y42 to K61 and Y68 to A85. A disulfide bridge links C99 with C104. The helical transmembrane segment at G113–V135 threads the bilayer.

This sequence belongs to the DsbB family. BdbC subfamily.

The protein localises to the cell membrane. In terms of biological role, required for disulfide bond formation in some proteins. This Bacillus cereus (strain ATCC 10987 / NRS 248) protein is Probable disulfide formation protein C 1 (bdbC1).